The sequence spans 190 residues: Cytoglobin (190 aa).

Residues 1 to 21 (MEKVPGDMEIERRERNEELSE) form a disordered region. The Globin domain occupies 18-167 (ELSEAERKAV…IYSHVTAAYK (150 aa)). Cysteine 38 and cysteine 83 are disulfide-bonded. Heme b contacts are provided by histidine 81 and histidine 113.

The protein belongs to the globin family. Monomeric. Homodimer; disulfide-linked in vitro. Also homooligomeric in vitro. Post-translationally, the formation of an intramolecular disulfide bond between cysteines Cys-38 and Cys-83 specifically enhances the nitrite reductase activity. As to expression, widely expressed (at protein level).

It is found in the cytoplasm. Its subcellular location is the nucleus. The catalysed reaction is Fe(II)-heme b-[protein] + nitric oxide + O2 = Fe(III)-heme b-[protein] + nitrate. It catalyses the reaction Fe(III)-heme b-[protein] + nitric oxide + H2O = Fe(II)-heme b-[protein] + nitrite + 2 H(+). It carries out the reaction 2 superoxide + 2 H(+) = H2O2 + O2. The enzyme catalyses H2O2 + AH2 = A + 2 H2O. Its activity is regulated as follows. The nitric oxide dioxygenase activity is activated by a reducing system composed of cytochrome b5, its upstream reductase CYB5R3 and NADH. Its function is as follows. Probable multifunctional globin with a hexacoordinated heme iron required for the catalysis of various reactions depending on redox condition of the cell as well as oxygen availability. Has a nitric oxide dioxygenase (NOD) activity and is most probably involved in cell-mediated and oxygen-dependent nitric oxide consumption. By scavenging this second messenger may regulate several biological processes including endothelium-mediated vasodilation and vascular tone. Under normoxic conditions functions as a nitric oxide dioxygenase (NOD) but under hypoxic conditions the globin may switch its function to that of a nitrite (NO2) reductase (NiR), generating nitric oxide. Could also have peroxidase and superoxide dismutase activities, detoxifying reactive oxygen species and protecting cells against oxidative stress. Also binds dioxygen with low affinity and could function as an oxygen sensor but has probably no function as a respiratory oxygen carrier. In Rattus norvegicus (Rat), this protein is Cytoglobin.